The primary structure comprises 79 residues: Serine protease inhibitor Kazal-type 1 (79 aa).

The first 18 residues, 1-18 (MKVAIIFLLSALALLSLA), serve as a signal peptide directing secretion. Residues 26 to 79 (NGKTPNCPKQIMGCPRIYDPVCGTNGITYPSECSLCFENRKFGTSIHIQRRGTC) enclose the Kazal-like domain. Intrachain disulfides connect cysteine 32–cysteine 61, cysteine 39–cysteine 58, and cysteine 47–cysteine 79.

It localises to the secreted. In terms of biological role, serine protease inhibitor which exhibits anti-trypsin activity. In the pancreas, protects against trypsin-catalyzed premature activation of zymogens. Functionally, in the male reproductive tract, binds to sperm heads where it modulates sperm capacitance by inhibiting calcium uptake and nitrogen oxide (NO) production. This Rattus norvegicus (Rat) protein is Serine protease inhibitor Kazal-type 1.